The chain runs to 390 residues: Serpin B3 (390 aa).

An N-acetylmethionine modification is found at M1.

It belongs to the serpin family. Ov-serpin subfamily. As to quaternary structure, interacts with MAPK8/JNK1. In terms of tissue distribution, squamous cells. Expressed in some hepatocellular carcinoma (at protein level).

The protein localises to the cytoplasm. Its function is as follows. May act as a papain-like cysteine protease inhibitor to modulate the host immune response against tumor cells. Also functions as an inhibitor of UV-induced apoptosis via suppression of the activity of c-Jun NH(2)-terminal kinase (JNK1). The chain is Serpin B3 (SERPINB3) from Homo sapiens (Human).